The following is a 115-amino-acid chain: U3-lycotoxin-Ls1s (115 aa).

The signal sequence occupies residues methionine 1 to serine 20. A propeptide spanning residues glutamate 21–arginine 44 is cleaved from the precursor. 4 disulfides stabilise this stretch: cysteine 48–cysteine 63, cysteine 55–cysteine 72, cysteine 62–cysteine 87, and cysteine 74–cysteine 85.

Belongs to the neurotoxin 19 (CSTX) family. 01 subfamily. Expressed by the venom gland.

The protein resides in the secreted. This chain is U3-lycotoxin-Ls1s, found in Lycosa singoriensis (Wolf spider).